The primary structure comprises 449 residues: C4-dicarboxylate transport protein (449 aa).

Helical transmembrane passes span 18 to 38 (PFYL…ALLG), 61 to 81 (MIIS…VAHV), 93 to 113 (VYFL…AHVV), 159 to 179 (FVGD…IALA), 202 to 222 (LVQM…AFTI), 244 to 264 (SLLF…FSIL), 311 to 331 (GYSF…LFIA), and 369 to 389 (AATL…ILGV).

Belongs to the dicarboxylate/amino acid:cation symporter (DAACS) (TC 2.A.23) family.

It is found in the cell inner membrane. In terms of biological role, responsible for the transport of dicarboxylates such as succinate, fumarate, and malate from the periplasm across the membrane. This Xylella fastidiosa (strain M12) protein is C4-dicarboxylate transport protein.